Here is a 426-residue protein sequence, read N- to C-terminus: Serine--tRNA ligase (426 aa).

229-231 (TAE) lines the L-serine pocket. ATP is bound at residue 260 to 262 (RSE). Glu-283 serves as a coordination point for L-serine. 347 to 350 (EIAS) is a binding site for ATP. Position 383 (Ser-383) interacts with L-serine.

It belongs to the class-II aminoacyl-tRNA synthetase family. Type-1 seryl-tRNA synthetase subfamily. As to quaternary structure, homodimer. The tRNA molecule binds across the dimer.

It localises to the cytoplasm. The catalysed reaction is tRNA(Ser) + L-serine + ATP = L-seryl-tRNA(Ser) + AMP + diphosphate + H(+). It catalyses the reaction tRNA(Sec) + L-serine + ATP = L-seryl-tRNA(Sec) + AMP + diphosphate + H(+). It functions in the pathway aminoacyl-tRNA biosynthesis; selenocysteinyl-tRNA(Sec) biosynthesis; L-seryl-tRNA(Sec) from L-serine and tRNA(Sec): step 1/1. Catalyzes the attachment of serine to tRNA(Ser). Is also able to aminoacylate tRNA(Sec) with serine, to form the misacylated tRNA L-seryl-tRNA(Sec), which will be further converted into selenocysteinyl-tRNA(Sec). The polypeptide is Serine--tRNA ligase (Rickettsia bellii (strain RML369-C)).